The primary structure comprises 92 residues: Small ribosomal subunit protein uS19 (92 aa).

It belongs to the universal ribosomal protein uS19 family.

Its function is as follows. Protein S19 forms a complex with S13 that binds strongly to the 16S ribosomal RNA. This chain is Small ribosomal subunit protein uS19, found in Nostoc punctiforme (strain ATCC 29133 / PCC 73102).